Here is a 202-residue protein sequence, read N- to C-terminus: Imidazoleglycerol-phosphate dehydratase (202 aa).

It belongs to the imidazoleglycerol-phosphate dehydratase family.

The protein localises to the cytoplasm. It carries out the reaction D-erythro-1-(imidazol-4-yl)glycerol 3-phosphate = 3-(imidazol-4-yl)-2-oxopropyl phosphate + H2O. Its pathway is amino-acid biosynthesis; L-histidine biosynthesis; L-histidine from 5-phospho-alpha-D-ribose 1-diphosphate: step 6/9. This Rhizobium leguminosarum bv. trifolii (strain WSM2304) protein is Imidazoleglycerol-phosphate dehydratase.